The chain runs to 334 residues: Putative heat shock protein HSP 90-alpha A5 (334 aa).

The tract at residues 55–107 is disordered; it reads KRNKQVSDAEAEKKEDKRKKKKESNDKPEIEDVGSDEEEEKKDADKKKKKSKE. Residues 59–69 are compositionally biased toward basic and acidic residues; it reads QVSDAEAEKKE. Residues 85 to 94 show a composition bias toward acidic residues; it reads EDVGSDEEEE. Ser-89 is subject to Phosphoserine. A coiled-coil region spans residues 234–267; sequence LELPEDEEEKKKQEEKKTKFENLCKIMKDMLEKK. Residues 314–334 form a disordered region; the sequence is EMPPLRGGDDTSRMEEVGGSG. Residues 320 to 334 are compositionally biased toward basic and acidic residues; it reads GGDDTSRMEEVGGSG. The TPR repeat-binding motif lies at 327–331; it reads MEEVG.

It belongs to the heat shock protein 90 family. In terms of assembly, homodimer.

It localises to the cytoplasm. In terms of biological role, putative molecular chaperone that may promote the maturation, structural maintenance and proper regulation of specific target proteins. In Homo sapiens (Human), this protein is Putative heat shock protein HSP 90-alpha A5 (HSP90AA5P).